A 147-amino-acid chain; its full sequence is UPF0306 protein YpAngola_A4021 (147 aa).

The protein belongs to the UPF0306 family.

The sequence is that of UPF0306 protein YpAngola_A4021 from Yersinia pestis bv. Antiqua (strain Angola).